Here is a 218-residue protein sequence, read N- to C-terminus: Small ribosomal subunit protein mS34 (218 aa).

The disordered stretch occupies residues 178–218 (RQKNGDPSTEEPMLSLERIRTDPWDYPENQEAKKKTKGTAV).

Belongs to the mitochondrion-specific ribosomal protein mS34 family. Component of the mitochondrial ribosome small subunit (28S) which comprises a 12S rRNA and about 30 distinct proteins.

It localises to the mitochondrion. Its function is as follows. Required for mitochondrial translation, plays a role in maintaining the stability of the small ribosomal subunit and the 12S rRNA that are required for mitoribosome formation. The protein is Small ribosomal subunit protein mS34 of Bos taurus (Bovine).